Here is a 149-residue protein sequence, read N- to C-terminus: MKLDLSTFLKRDELPFRSLEEAKEYVAKYTLNFINIELEGLPKEEWENTLKTWVKIFAFARELLKLPQERRKEVYRKYNFDSMMEGIMEDAVKVLYGFYSLGILKPEDKPHKALEKATELIENEEELLKREGIKRENLKFIKEFLKKFN.

Positions 111-140 (HKALEKATELIENEEELLKREGIKRENLKF) form a coiled coil.

This is an uncharacterized protein from Aquifex aeolicus (strain VF5).